The chain runs to 206 residues: Thiamine-phosphate synthase (206 aa).

Residues 36–40 (QLRAK) and Asn68 contribute to the 4-amino-2-methyl-5-(diphosphooxymethyl)pyrimidine site. Positions 69 and 88 each coordinate Mg(2+). Ser105 provides a ligand contact to 4-amino-2-methyl-5-(diphosphooxymethyl)pyrimidine. Residue 131 to 133 (TPT) participates in 2-[(2R,5Z)-2-carboxy-4-methylthiazol-5(2H)-ylidene]ethyl phosphate binding. Lys134 lines the 4-amino-2-methyl-5-(diphosphooxymethyl)pyrimidine pocket. Residue Gly162 coordinates 2-[(2R,5Z)-2-carboxy-4-methylthiazol-5(2H)-ylidene]ethyl phosphate.

It belongs to the thiamine-phosphate synthase family. Mg(2+) serves as cofactor.

It catalyses the reaction 2-[(2R,5Z)-2-carboxy-4-methylthiazol-5(2H)-ylidene]ethyl phosphate + 4-amino-2-methyl-5-(diphosphooxymethyl)pyrimidine + 2 H(+) = thiamine phosphate + CO2 + diphosphate. The catalysed reaction is 2-(2-carboxy-4-methylthiazol-5-yl)ethyl phosphate + 4-amino-2-methyl-5-(diphosphooxymethyl)pyrimidine + 2 H(+) = thiamine phosphate + CO2 + diphosphate. The enzyme catalyses 4-methyl-5-(2-phosphooxyethyl)-thiazole + 4-amino-2-methyl-5-(diphosphooxymethyl)pyrimidine + H(+) = thiamine phosphate + diphosphate. Its pathway is cofactor biosynthesis; thiamine diphosphate biosynthesis; thiamine phosphate from 4-amino-2-methyl-5-diphosphomethylpyrimidine and 4-methyl-5-(2-phosphoethyl)-thiazole: step 1/1. In terms of biological role, condenses 4-methyl-5-(beta-hydroxyethyl)thiazole monophosphate (THZ-P) and 2-methyl-4-amino-5-hydroxymethyl pyrimidine pyrophosphate (HMP-PP) to form thiamine monophosphate (TMP). The protein is Thiamine-phosphate synthase of Thermus thermophilus (strain ATCC BAA-163 / DSM 7039 / HB27).